A 302-amino-acid chain; its full sequence is HTH-type transcriptional regulator AbgR (302 aa).

The region spanning 5 to 62 (VKIHQIRAFVEVARQGSIRGASRMLNMSQPALSKSIQELEEGLAAQLFFRRSKGVTLT) is the HTH lysR-type domain. A DNA-binding region (H-T-H motif) is located at residues 22–41 (IRGASRMLNMSQPALSKSIQ).

This sequence belongs to the LysR transcriptional regulatory family.

Its function is as follows. Could be the regulator of the abg operon. The sequence is that of HTH-type transcriptional regulator AbgR (abgR) from Escherichia coli (strain K12).